Here is a 479-residue protein sequence, read N- to C-terminus: Deoxyribodipyrimidine photo-lyase (479 aa).

Residues 6-132 (APVIVWFRKD…TVRSFSGQLL (127 aa)) enclose the Photolyase/cryptochrome alpha/beta domain. Position 226 (Tyr226) interacts with FAD. Residue Arg230 coordinates DNA. Residues 238–242 (TSLLS) and 277–284 (EIVWREFC) contribute to the FAD site. 2 interaction with DNA regions span residues 277–284 (EIVWREFC) and 343–344 (NR). Residue 374 to 376 (DAD) participates in FAD binding. Gln406 serves as a coordination point for DNA.

This sequence belongs to the DNA photolyase class-3 family. FAD serves as cofactor. (6R)-5,10-methylene-5,6,7,8-tetrahydrofolate is required as a cofactor.

The enzyme catalyses cyclobutadipyrimidine (in DNA) = 2 pyrimidine residues (in DNA).. In terms of biological role, photolyase involved in the repair of UV radiation-induced DNA damage. By using blue-light energy, catalyzes the photoreactivation of cyclobutane pyrimidine dimers (CPDs), which are formed between adjacent bases on the same DNA strand upon exposure to ultraviolet radiation. Can repair CPD lesions in ssDNA as well as in dsDNA. This chain is Deoxyribodipyrimidine photo-lyase, found in Agrobacterium fabrum (strain C58 / ATCC 33970) (Agrobacterium tumefaciens (strain C58)).